A 242-amino-acid chain; its full sequence is uncharacterized protein (242 aa).

The region spanning 3–116 (TALVIDDEQF…RLNKTVKRLN (114 aa)) is the Response regulatory domain. Asp-54 is modified (4-aspartylphosphate). Residues 139-240 (IPCIGHNRIV…LKVLKEMLGI (102 aa)) form the HTH LytTR-type domain.

This is an uncharacterized protein from Vibrio parahaemolyticus serotype O3:K6 (strain RIMD 2210633).